The primary structure comprises 338 residues: Biotin synthase (338 aa).

The region spanning 50-277 (QAVQLSTLMS…KSYVRLSAGR (228 aa)) is the Radical SAM core domain. The [4Fe-4S] cluster site is built by Cys-65, Cys-69, and Cys-72. Positions 109, 140, 200, and 272 each coordinate [2Fe-2S] cluster.

Belongs to the radical SAM superfamily. Biotin synthase family. In terms of assembly, homodimer. The cofactor is [4Fe-4S] cluster. Requires [2Fe-2S] cluster as cofactor.

It carries out the reaction (4R,5S)-dethiobiotin + (sulfur carrier)-SH + 2 reduced [2Fe-2S]-[ferredoxin] + 2 S-adenosyl-L-methionine = (sulfur carrier)-H + biotin + 2 5'-deoxyadenosine + 2 L-methionine + 2 oxidized [2Fe-2S]-[ferredoxin]. It functions in the pathway cofactor biosynthesis; biotin biosynthesis; biotin from 7,8-diaminononanoate: step 2/2. Functionally, catalyzes the conversion of dethiobiotin (DTB) to biotin by the insertion of a sulfur atom into dethiobiotin via a radical-based mechanism. This Actinobacillus succinogenes (strain ATCC 55618 / DSM 22257 / CCUG 43843 / 130Z) protein is Biotin synthase.